A 524-amino-acid chain; its full sequence is Phosphoenolpyruvate carboxykinase (ATP) (524 aa).

Substrate contacts are provided by Arg-52, Tyr-188, and Lys-194. Residues Lys-194, His-213, and 229-237 contribute to the ATP site; that span reads GLSGTGKTT. Residues Lys-194 and His-213 each contribute to the Mn(2+) site. Residue Asp-250 coordinates Mn(2+). Glu-278, Arg-314, and Thr-439 together coordinate ATP. Arg-314 is a binding site for substrate.

The protein belongs to the phosphoenolpyruvate carboxykinase (ATP) family. Mn(2+) is required as a cofactor.

Its subcellular location is the cytoplasm. The enzyme catalyses oxaloacetate + ATP = phosphoenolpyruvate + ADP + CO2. The protein operates within carbohydrate biosynthesis; gluconeogenesis. Involved in the gluconeogenesis. Catalyzes the conversion of oxaloacetate (OAA) to phosphoenolpyruvate (PEP) through direct phosphoryl transfer between the nucleoside triphosphate and OAA. In Campylobacter lari (strain RM2100 / D67 / ATCC BAA-1060), this protein is Phosphoenolpyruvate carboxykinase (ATP).